We begin with the raw amino-acid sequence, 186 residues long: Threonylcarbamoyl-AMP synthase (186 aa).

In terms of domain architecture, YrdC-like spans 2–186 (STEFEQAVAA…ARTGAVIRPS (185 aa)).

This sequence belongs to the SUA5 family. TsaC subfamily.

Its subcellular location is the cytoplasm. It catalyses the reaction L-threonine + hydrogencarbonate + ATP = L-threonylcarbamoyladenylate + diphosphate + H2O. In terms of biological role, required for the formation of a threonylcarbamoyl group on adenosine at position 37 (t(6)A37) in tRNAs that read codons beginning with adenine. Catalyzes the conversion of L-threonine, HCO(3)(-)/CO(2) and ATP to give threonylcarbamoyl-AMP (TC-AMP) as the acyladenylate intermediate, with the release of diphosphate. The sequence is that of Threonylcarbamoyl-AMP synthase from Aeromonas salmonicida (strain A449).